Here is a 104-residue protein sequence, read N- to C-terminus: Protein Rev (104 aa).

Phosphoserine; by host CK2 is present on S5. Positions 18-26 (VIKILYQSN) are homomultimerization. The span at 25–34 (SNPYPNSKGT) shows a compositional bias: polar residues. Disordered regions lie at residues 25-48 (SNPYPNSKGTRQARRNRRRRWRAR) and 63-104 (CLGG…ATTE). The Nuclear localization signal and RNA-binding (RRE) motif lies at 34–50 (TRQARRNRRRRWRARQR). Positions 35–48 (RQARRNRRRRWRAR) are enriched in basic residues. Pro residues predominate over residues 67 to 77 (PPEPVDLPLPP). The Nuclear export signal and binding to XPO1 signature appears at 73–84 (LPLPPLDRLTLD). The span at 91–104 (TPGTESQQGTATTE) shows a compositional bias: polar residues.

Belongs to the HIV-1 REV protein family. As to quaternary structure, homomultimer; when bound to the RRE. Multimeric assembly is essential for activity and may involve XPO1. Binds to human KPNB1, XPO1, TNPO1, RANBP5 and IPO7. Interacts with the viral Integrase. Interacts with human KHDRBS1. Interacts with human NAP1; this interaction decreases Rev multimerization and stimulates its activity. Interacts with human DEAD-box helicases DDX3 and DDX24; these interactions may serve for viral RNA export to the cytoplasm and packaging, respectively. Interacts with human PSIP1; this interaction may inhibit HIV-1 DNA integration by promoting dissociation of the Integrase-LEDGF/p75 complex. Asymmetrically arginine dimethylated at one site by host PRMT6. Methylation impairs the RNA-binding activity and export of viral RNA from the nucleus to the cytoplasm. In terms of processing, phosphorylated by protein kinase CK2. Presence of, and maybe binding to the N-terminus of the regulatory beta subunit of CK2 is necessary for CK2-mediated Rev's phosphorylation.

The protein resides in the host nucleus. Its subcellular location is the host nucleolus. It is found in the host cytoplasm. Functionally, escorts unspliced or incompletely spliced viral pre-mRNAs (late transcripts) out of the nucleus of infected cells. These pre-mRNAs carry a recognition sequence called Rev responsive element (RRE) located in the env gene, that is not present in fully spliced viral mRNAs (early transcripts). This function is essential since most viral proteins are translated from unspliced or partially spliced pre-mRNAs which cannot exit the nucleus by the pathway used by fully processed cellular mRNAs. Rev itself is translated from a fully spliced mRNA that readily exits the nucleus. Rev's nuclear localization signal (NLS) binds directly to KPNB1/Importin beta-1 without previous binding to KPNA1/Importin alpha-1. KPNB1 binds to the GDP bound form of RAN (Ran-GDP) and targets Rev to the nucleus. In the nucleus, the conversion from Ran-GDP to Ran-GTP dissociates Rev from KPNB1 and allows Rev's binding to the RRE in viral pre-mRNAs. Rev multimerization on the RRE via cooperative assembly exposes its nuclear export signal (NES) to the surface. Rev can then form a complex with XPO1/CRM1 and Ran-GTP, leading to nuclear export of the complex. Conversion from Ran-GTP to Ran-GDP mediates dissociation of the Rev/RRE/XPO1/RAN complex, so that Rev can return to the nucleus for a subsequent round of export. Beside KPNB1, also seems to interact with TNPO1/Transportin-1, RANBP5/IPO5 and IPO7/RANBP7 for nuclear import. The nucleoporin-like HRB/RIP is an essential cofactor that probably indirectly interacts with Rev to release HIV RNAs from the perinuclear region to the cytoplasm. This is Protein Rev from Human immunodeficiency virus type 1 group N (isolate YBF30) (HIV-1).